Consider the following 158-residue polypeptide: MSKTPLTVAGANKLKAELQKLKSEDRPRVIAAIAEAREHGDLKENAEYHAAREQQGFIEGRIKEIEAKLSNAQIIDVTTLNAGGKVVFGATVDLSDEETGKEVTYQIVGDDEADIKEGKISVNSPIARALIGKEEGDVVTVKAPGGDKDYEIVAVKYI.

A coiled-coil region spans residues 53 to 73 (EQQGFIEGRIKEIEAKLSNAQ).

Belongs to the GreA/GreB family.

Functionally, necessary for efficient RNA polymerase transcription elongation past template-encoded arresting sites. The arresting sites in DNA have the property of trapping a certain fraction of elongating RNA polymerases that pass through, resulting in locked ternary complexes. Cleavage of the nascent transcript by cleavage factors such as GreA or GreB allows the resumption of elongation from the new 3'terminus. GreA releases sequences of 2 to 3 nucleotides. The chain is Transcription elongation factor GreA from Thioalkalivibrio sulfidiphilus (strain HL-EbGR7).